Here is a 215-residue protein sequence, read N- to C-terminus: Chaperone protein TorD (215 aa).

It belongs to the TorD/DmsD family. TorD subfamily.

Its subcellular location is the cytoplasm. Involved in the biogenesis of TorA. Acts on TorA before the insertion of the molybdenum cofactor and, as a result, probably favors a conformation of the apoenzyme that is competent for acquiring the cofactor. This Vibrio vulnificus (strain YJ016) protein is Chaperone protein TorD.